The sequence spans 397 residues: 8-amino-7-oxononanoate synthase (397 aa).

Arginine 21 lines the substrate pocket. 110–111 is a pyridoxal 5'-phosphate binding site; that stretch reads GY. Histidine 135 serves as a coordination point for substrate. The pyridoxal 5'-phosphate site is built by serine 181, histidine 209, and threonine 238. An N6-(pyridoxal phosphate)lysine modification is found at lysine 241. Threonine 355 contributes to the substrate binding site.

Belongs to the class-II pyridoxal-phosphate-dependent aminotransferase family. BioF subfamily. Homodimer. The cofactor is pyridoxal 5'-phosphate.

The enzyme catalyses 6-carboxyhexanoyl-[ACP] + L-alanine + H(+) = (8S)-8-amino-7-oxononanoate + holo-[ACP] + CO2. The protein operates within cofactor biosynthesis; biotin biosynthesis. In terms of biological role, catalyzes the decarboxylative condensation of pimeloyl-[acyl-carrier protein] and L-alanine to produce 8-amino-7-oxononanoate (AON), [acyl-carrier protein], and carbon dioxide. In Saccharophagus degradans (strain 2-40 / ATCC 43961 / DSM 17024), this protein is 8-amino-7-oxononanoate synthase.